Consider the following 344-residue polypeptide: uncharacterized protein (344 aa).

An N-terminal signal peptide occupies residues 1 to 28; it reads MNKKSLNIVATLGILLVLAFSGCVDQSA.

Belongs to the bacterial solute-binding protein 1 family. WtpA subfamily.

This is an uncharacterized protein from Methanococcus maripaludis (strain C7 / ATCC BAA-1331).